A 1330-amino-acid polypeptide reads, in one-letter code: DNA-directed RNA polymerase subunit beta'' (1330 aa).

Cysteine 214, cysteine 282, cysteine 289, and cysteine 292 together coordinate Zn(2+).

This sequence belongs to the RNA polymerase beta' chain family. RpoC2 subfamily. In terms of assembly, in plastids the minimal PEP RNA polymerase catalytic core is composed of four subunits: alpha, beta, beta', and beta''. When a (nuclear-encoded) sigma factor is associated with the core the holoenzyme is formed, which can initiate transcription. The cofactor is Zn(2+).

It is found in the plastid. It localises to the chloroplast. It carries out the reaction RNA(n) + a ribonucleoside 5'-triphosphate = RNA(n+1) + diphosphate. Its function is as follows. DNA-dependent RNA polymerase catalyzes the transcription of DNA into RNA using the four ribonucleoside triphosphates as substrates. The chain is DNA-directed RNA polymerase subunit beta'' from Physcomitrium patens (Spreading-leaved earth moss).